We begin with the raw amino-acid sequence, 1342 residues long: DNA-directed RNA polymerase subunit beta (1342 aa).

This sequence belongs to the RNA polymerase beta chain family. The RNAP catalytic core consists of 2 alpha, 1 beta, 1 beta' and 1 omega subunit. When a sigma factor is associated with the core the holoenzyme is formed, which can initiate transcription.

The enzyme catalyses RNA(n) + a ribonucleoside 5'-triphosphate = RNA(n+1) + diphosphate. DNA-dependent RNA polymerase catalyzes the transcription of DNA into RNA using the four ribonucleoside triphosphates as substrates. The chain is DNA-directed RNA polymerase subunit beta from Aliivibrio fischeri (strain MJ11) (Vibrio fischeri).